Reading from the N-terminus, the 147-residue chain is Hemoglobin subunit epsilon (147 aa).

The Globin domain maps to 3–147; that stretch reads HWSAEEKQLI…VAHALPRKYH (145 aa). The heme b site is built by His-64 and His-93.

The protein belongs to the globin family. In terms of assembly, heterotetramer of two epsilon chains and two alpha chains. Red blood cells.

Beta-type chain found in early embryos. The chain is Hemoglobin subunit epsilon (HBE) from Cairina moschata (Muscovy duck).